The chain runs to 464 residues: UDP-N-acetylmuramate--L-alanine ligase (464 aa).

118–124 contacts ATP; sequence GTHGKTT.

This sequence belongs to the MurCDEF family.

The protein resides in the cytoplasm. It carries out the reaction UDP-N-acetyl-alpha-D-muramate + L-alanine + ATP = UDP-N-acetyl-alpha-D-muramoyl-L-alanine + ADP + phosphate + H(+). The protein operates within cell wall biogenesis; peptidoglycan biosynthesis. In terms of biological role, cell wall formation. The sequence is that of UDP-N-acetylmuramate--L-alanine ligase from Dinoroseobacter shibae (strain DSM 16493 / NCIMB 14021 / DFL 12).